The sequence spans 861 residues: Probable linoleate 9S-lipoxygenase 8 (861 aa).

The 128-residue stretch at 33–160 (FTDLASSLTG…NYKSDRIFFA (128 aa)) folds into the PLAT domain. Residues 163–861 (PYLPSETPEL…GKGIPNSVSI (699 aa)) form the Lipoxygenase domain. The interval 220–245 (TLGGSAEYPYPRRGRTGRPPTRTDPK) is disordered. Residues His-522, His-527, His-713, Asn-717, and Ile-861 each coordinate Fe cation.

Belongs to the lipoxygenase family. In terms of assembly, monomer. Fe cation is required as a cofactor.

The protein localises to the cytoplasm. It catalyses the reaction (9Z,12Z)-octadecadienoate + O2 = (9S)-hydroperoxy-(10E,12Z)-octadecadienoate. It functions in the pathway lipid metabolism; oxylipin biosynthesis. Its function is as follows. Plant lipoxygenases may be involved in a number of diverse aspects of plant physiology including growth and development, pest resistance, and senescence or responses to wounding. Catalyzes the hydroperoxidation of lipids containing a cis,cis-1,4-pentadiene structure. In Solanum tuberosum (Potato), this protein is Probable linoleate 9S-lipoxygenase 8 (LOX1.8).